Here is a 93-residue protein sequence, read N- to C-terminus: UPF0473 protein YrzB (93 aa).

This sequence belongs to the UPF0473 family.

The sequence is that of UPF0473 protein YrzB (yrzB) from Bacillus subtilis (strain 168).